A 223-amino-acid polypeptide reads, in one-letter code: Serine/threonine/tyrosine-interacting protein B (223 aa).

Residues glutamate 28–alanine 176 enclose the Tyrosine-protein phosphatase domain.

Belongs to the protein-tyrosine phosphatase family. Non-receptor class subfamily.

Its function is as follows. Catalytically inactive phosphatase. The sequence is that of Serine/threonine/tyrosine-interacting protein B (styx-b) from Xenopus laevis (African clawed frog).